Reading from the N-terminus, the 197-residue chain is 22.7 kDa class IV heat shock protein (197 aa).

A signal peptide spans 1–28 (MSLKPLNMLLVPFLLLILAADFPLKAKA). The sHSP domain maps to 68–184 (PSITLSHARV…GPRMVSIVEE (117 aa)). The short motif at 194–197 (DELK) is the Prevents secretion from ER element.

The protein belongs to the small heat shock protein (HSP20) family. As to quaternary structure, forms oligomeric structures.

Its subcellular location is the endoplasmic reticulum lumen. The polypeptide is 22.7 kDa class IV heat shock protein (HSP22.7) (Pisum sativum (Garden pea)).